We begin with the raw amino-acid sequence, 201 residues long: 3-isopropylmalate dehydratase small subunit (201 aa).

Belongs to the LeuD family. LeuD type 1 subfamily. Heterodimer of LeuC and LeuD.

It catalyses the reaction (2R,3S)-3-isopropylmalate = (2S)-2-isopropylmalate. Its pathway is amino-acid biosynthesis; L-leucine biosynthesis; L-leucine from 3-methyl-2-oxobutanoate: step 2/4. Its function is as follows. Catalyzes the isomerization between 2-isopropylmalate and 3-isopropylmalate, via the formation of 2-isopropylmaleate. The sequence is that of 3-isopropylmalate dehydratase small subunit from Methylorubrum populi (strain ATCC BAA-705 / NCIMB 13946 / BJ001) (Methylobacterium populi).